Reading from the N-terminus, the 58-residue chain is Large ribosomal subunit protein uL30 (58 aa).

The protein belongs to the universal ribosomal protein uL30 family. Part of the 50S ribosomal subunit.

The protein is Large ribosomal subunit protein uL30 of Pseudomonas putida (strain W619).